Here is a 142-residue protein sequence, read N- to C-terminus: DNA-directed RNA polymerase subunit omega (142 aa).

Residues 104 to 142 are disordered; that stretch reads FNTDADVDQESTDIQDDEVENEMSNQDSEDIDDEVDNEE. Positions 108 to 142 are enriched in acidic residues; it reads ADVDQESTDIQDDEVENEMSNQDSEDIDDEVDNEE.

It belongs to the RNA polymerase subunit omega family. In terms of assembly, the RNAP catalytic core consists of 2 alpha, 1 beta, 1 beta' and 1 omega subunit. When a sigma factor is associated with the core the holoenzyme is formed, which can initiate transcription.

The catalysed reaction is RNA(n) + a ribonucleoside 5'-triphosphate = RNA(n+1) + diphosphate. In terms of biological role, promotes RNA polymerase assembly. Latches the N- and C-terminal regions of the beta' subunit thereby facilitating its interaction with the beta and alpha subunits. In Wolbachia sp. subsp. Brugia malayi (strain TRS), this protein is DNA-directed RNA polymerase subunit omega.